The following is a 106-amino-acid chain: MQYLAAYALVALSGKTPSKADVQAVLKAAGVAVDASRVDAVFQEVEGKSFDALVAEGRTKLVGSGSAAPAGAVSTAGAGAGAVAEAKKEEPEEEEADDDMGFGLFD.

Positions 79–106 (GAGAVAEAKKEEPEEEEADDDMGFGLFD) are disordered. A compositionally biased stretch (acidic residues) spans 91-100 (PEEEEADDDM).

Belongs to the eukaryotic ribosomal protein P1/P2 family. As to quaternary structure, P1 and P2 exist as dimers at the large ribosomal subunit. In terms of processing, phosphorylated.

Its function is as follows. Plays an important role in the elongation step of protein synthesis. The chain is Large ribosomal subunit protein P2 (LIP) from Leishmania infantum.